The following is a 247-amino-acid chain: Segregation and condensation protein A (247 aa).

The protein belongs to the ScpA family. In terms of assembly, component of a cohesin-like complex composed of ScpA, ScpB and the Smc homodimer, in which ScpA and ScpB bind to the head domain of Smc. The presence of the three proteins is required for the association of the complex with DNA.

Its subcellular location is the cytoplasm. Functionally, participates in chromosomal partition during cell division. May act via the formation of a condensin-like complex containing Smc and ScpB that pull DNA away from mid-cell into both cell halves. The chain is Segregation and condensation protein A from Bacillus anthracis (strain A0248).